We begin with the raw amino-acid sequence, 129 residues long: Phosphoribosyl-AMP cyclohydrolase (129 aa).

Residue aspartate 76 coordinates Mg(2+). A Zn(2+)-binding site is contributed by cysteine 77. 2 residues coordinate Mg(2+): aspartate 78 and aspartate 80. The Zn(2+) site is built by cysteine 97 and cysteine 104.

Belongs to the PRA-CH family. In terms of assembly, homodimer. Mg(2+) is required as a cofactor. Zn(2+) serves as cofactor.

Its subcellular location is the cytoplasm. It carries out the reaction 1-(5-phospho-beta-D-ribosyl)-5'-AMP + H2O = 1-(5-phospho-beta-D-ribosyl)-5-[(5-phospho-beta-D-ribosylamino)methylideneamino]imidazole-4-carboxamide. Its pathway is amino-acid biosynthesis; L-histidine biosynthesis; L-histidine from 5-phospho-alpha-D-ribose 1-diphosphate: step 3/9. In terms of biological role, catalyzes the hydrolysis of the adenine ring of phosphoribosyl-AMP. The chain is Phosphoribosyl-AMP cyclohydrolase from Leptothrix cholodnii (strain ATCC 51168 / LMG 8142 / SP-6) (Leptothrix discophora (strain SP-6)).